A 413-amino-acid polypeptide reads, in one-letter code: MMISIFSLLASTAILVFANGQSNVKLEFVQAMWRHGERASQVDQYPIYEKDWIYGGGGLGELTAIGMGEMNELGWLIRKRYVTKLKFLTPKYASREVYFRSTNFNRTIISAQSLLYGLFPPSLYDVKNVDYPYSPLTWFPGFTFVPVHVDGPDQCAASQNCPCTRYDLLQGQMLTLPEVLPKYTQVVLLNRRVGGYYNMTSGLDSFTTYPDTWKCQRAYFNRTMYAKLPWYNEELYYQAQVTYAPVKGFLEGNFENPAVTSSGLDVGLEIKKVRSGVIINEVFNRANEKLNCAELGQNCTSYLNKLKFYGYSIHDNNVYGVLVALGIPQIANTLDGWPAYAAGIFMEFHRNTSTNERFFKVLYREGDDTPISDVTSQLPICNGATLCPLGALQTLAETLKPLPDITTLCKTPL.

His-35 serves as the catalytic Nucleophile. Asp-315 (proton donor) is an active-site residue. Cys-381 and Cys-387 are joined by a disulfide.

It belongs to the histidine acid phosphatase family.

The enzyme catalyses a phosphate monoester + H2O = an alcohol + phosphate. This Caenorhabditis elegans protein is Putative acid phosphatase 11 (pho-11).